A 352-amino-acid chain; its full sequence is Phenylalanine--tRNA ligase alpha subunit (352 aa).

Glu258 serves as a coordination point for Mg(2+).

Belongs to the class-II aminoacyl-tRNA synthetase family. Phe-tRNA synthetase alpha subunit type 1 subfamily. As to quaternary structure, tetramer of two alpha and two beta subunits. Requires Mg(2+) as cofactor.

It localises to the cytoplasm. It carries out the reaction tRNA(Phe) + L-phenylalanine + ATP = L-phenylalanyl-tRNA(Phe) + AMP + diphosphate + H(+). The chain is Phenylalanine--tRNA ligase alpha subunit from Staphylococcus saprophyticus subsp. saprophyticus (strain ATCC 15305 / DSM 20229 / NCIMB 8711 / NCTC 7292 / S-41).